Consider the following 93-residue polypeptide: Large ribosomal subunit protein uL23 (93 aa).

It belongs to the universal ribosomal protein uL23 family. In terms of assembly, part of the 50S ribosomal subunit. Contacts protein L29, and trigger factor when it is bound to the ribosome.

Its function is as follows. One of the early assembly proteins it binds 23S rRNA. One of the proteins that surrounds the polypeptide exit tunnel on the outside of the ribosome. Forms the main docking site for trigger factor binding to the ribosome. In Helicobacter pylori (strain P12), this protein is Large ribosomal subunit protein uL23.